The following is a 440-amino-acid chain: Adenylosuccinate synthetase (440 aa).

Residues 12 to 18 (GDEGKGK) and 40 to 42 (GHT) each bind GTP. Asp13 functions as the Proton acceptor in the catalytic mechanism. Mg(2+) contacts are provided by Asp13 and Gly40. Residues 13–16 (DEGK), 38–41 (NAGH), Thr128, Arg142, Gln223, Thr238, and Arg302 contribute to the IMP site. Residue His41 is the Proton donor of the active site. 298–304 (TTTGRPR) contributes to the substrate binding site. GTP-binding positions include Arg304, 330 to 332 (KLD), and 412 to 414 (SVG).

Belongs to the adenylosuccinate synthetase family. In terms of assembly, homodimer. Mg(2+) is required as a cofactor.

The protein resides in the cytoplasm. It catalyses the reaction IMP + L-aspartate + GTP = N(6)-(1,2-dicarboxyethyl)-AMP + GDP + phosphate + 2 H(+). The protein operates within purine metabolism; AMP biosynthesis via de novo pathway; AMP from IMP: step 1/2. Its function is as follows. Plays an important role in the de novo pathway of purine nucleotide biosynthesis. Catalyzes the first committed step in the biosynthesis of AMP from IMP. The sequence is that of Adenylosuccinate synthetase from Gloeobacter violaceus (strain ATCC 29082 / PCC 7421).